A 173-amino-acid chain; its full sequence is Adenine phosphoribosyltransferase (173 aa).

The protein belongs to the purine/pyrimidine phosphoribosyltransferase family. Homodimer.

The protein resides in the cytoplasm. The catalysed reaction is AMP + diphosphate = 5-phospho-alpha-D-ribose 1-diphosphate + adenine. The protein operates within purine metabolism; AMP biosynthesis via salvage pathway; AMP from adenine: step 1/1. In terms of biological role, catalyzes a salvage reaction resulting in the formation of AMP, that is energically less costly than de novo synthesis. In Macrococcus caseolyticus (strain JCSC5402) (Macrococcoides caseolyticum), this protein is Adenine phosphoribosyltransferase.